We begin with the raw amino-acid sequence, 276 residues long: Sulfur carrier protein FdhD (276 aa).

C120 functions as the Cysteine persulfide intermediate in the catalytic mechanism.

This sequence belongs to the FdhD family.

Its subcellular location is the cytoplasm. Required for formate dehydrogenase (FDH) activity. Acts as a sulfur carrier protein that transfers sulfur from IscS to the molybdenum cofactor prior to its insertion into FDH. The protein is Sulfur carrier protein FdhD of Bordetella parapertussis (strain 12822 / ATCC BAA-587 / NCTC 13253).